Here is a 264-residue protein sequence, read N- to C-terminus: S-adenosylmethionine decarboxylase proenzyme (264 aa).

Serine 113 acts as the Schiff-base intermediate with substrate; via pyruvic acid in catalysis. At serine 113 the chain carries Pyruvic acid (Ser); by autocatalysis. Histidine 118 serves as the catalytic Proton acceptor; for processing activity. Residue cysteine 141 is the Proton donor; for catalytic activity of the active site.

Belongs to the prokaryotic AdoMetDC family. Type 2 subfamily. In terms of assembly, heterooctamer of four alpha and four beta chains arranged as a tetramer of alpha/beta heterodimers. Pyruvate is required as a cofactor. Post-translationally, is synthesized initially as an inactive proenzyme. Formation of the active enzyme involves a self-maturation process in which the active site pyruvoyl group is generated from an internal serine residue via an autocatalytic post-translational modification. Two non-identical subunits are generated from the proenzyme in this reaction, and the pyruvate is formed at the N-terminus of the alpha chain, which is derived from the carboxyl end of the proenzyme. The post-translation cleavage follows an unusual pathway, termed non-hydrolytic serinolysis, in which the side chain hydroxyl group of the serine supplies its oxygen atom to form the C-terminus of the beta chain, while the remainder of the serine residue undergoes an oxidative deamination to produce ammonia and the pyruvoyl group blocking the N-terminus of the alpha chain.

It carries out the reaction S-adenosyl-L-methionine + H(+) = S-adenosyl 3-(methylsulfanyl)propylamine + CO2. The protein operates within amine and polyamine biosynthesis; S-adenosylmethioninamine biosynthesis; S-adenosylmethioninamine from S-adenosyl-L-methionine: step 1/1. Its function is as follows. Catalyzes the decarboxylation of S-adenosylmethionine to S-adenosylmethioninamine (dcAdoMet), the propylamine donor required for the synthesis of the polyamines spermine and spermidine from the diamine putrescine. The chain is S-adenosylmethionine decarboxylase proenzyme from Xylella fastidiosa (strain 9a5c).